Reading from the N-terminus, the 350-residue chain is Small ribosomal subunit biogenesis GTPase RsgA (350 aa).

Over residues 1–17 (MSKNKLSKGQQRRVNAN) the composition is skewed to polar residues. The disordered stretch occupies residues 1–33 (MSKNKLSKGQQRRVNANHQRRLKTSKEKPDYDD). One can recognise a CP-type G domain in the interval 104-273 (TSVLTRPDFY…VIDSPGVREF (170 aa)). GTP contacts are provided by residues 160-163 (NKID) and 214-222 (GQSGVGKSS). Cys-297, Cys-302, His-304, and Cys-310 together coordinate Zn(2+).

This sequence belongs to the TRAFAC class YlqF/YawG GTPase family. RsgA subfamily. In terms of assembly, monomer. Associates with 30S ribosomal subunit, binds 16S rRNA. It depends on Zn(2+) as a cofactor.

Its subcellular location is the cytoplasm. In terms of biological role, one of several proteins that assist in the late maturation steps of the functional core of the 30S ribosomal subunit. Helps release RbfA from mature subunits. May play a role in the assembly of ribosomal proteins into the subunit. Circularly permuted GTPase that catalyzes slow GTP hydrolysis, GTPase activity is stimulated by the 30S ribosomal subunit. The protein is Small ribosomal subunit biogenesis GTPase RsgA of Escherichia coli (strain SMS-3-5 / SECEC).